The following is a 119-amino-acid chain: Protein TusC (119 aa).

Belongs to the DsrF/TusC family. As to quaternary structure, heterohexamer, formed by a dimer of trimers. The hexameric TusBCD complex contains 2 copies each of TusB, TusC and TusD. The TusBCD complex interacts with TusE.

The protein localises to the cytoplasm. Functionally, part of a sulfur-relay system required for 2-thiolation of 5-methylaminomethyl-2-thiouridine (mnm(5)s(2)U) at tRNA wobble positions. In Escherichia coli O157:H7, this protein is Protein TusC.